Reading from the N-terminus, the 189-residue chain is Flavin prenyltransferase UbiX (189 aa).

FMN-binding positions include 11-13 (GAS), Ser-37, 88-91 (SMRT), and Arg-123. Residue Tyr-153 coordinates dimethylallyl phosphate.

This sequence belongs to the UbiX/PAD1 family.

It catalyses the reaction dimethylallyl phosphate + FMNH2 = prenylated FMNH2 + phosphate. Flavin prenyltransferase that catalyzes the synthesis of the prenylated FMN cofactor (prenyl-FMN) for 4-hydroxy-3-polyprenylbenzoic acid decarboxylase UbiD. The prenyltransferase is metal-independent and links a dimethylallyl moiety from dimethylallyl monophosphate (DMAP) to the flavin N5 and C6 atoms of FMN. The polypeptide is Flavin prenyltransferase UbiX (Neisseria meningitidis serogroup B (strain ATCC BAA-335 / MC58)).